The primary structure comprises 766 residues: BMP/retinoic acid-inducible neural-specific protein 3 (766 aa).

Positions Met-1–Ala-33 are cleaved as a signal peptide. Positions Arg-74 to Ala-264 constitute an MACPF domain. Residues Asn-168, Asn-337, Asn-456, Asn-562, Asn-609, and Asn-641 are each glycosylated (N-linked (GlcNAc...) asparagine).

The protein belongs to the BRINP family. As to expression, expressed in the brain. Weakly expressed in embryonic stem (ES) cells. Expressed in ES-derived neural stem cells (NSCs) and neuronal cells.

It localises to the secreted. It is found in the mitochondrion. Functionally, inhibits neuronal cell proliferation by negative regulation of the cell cycle transition. Promotes pituitary gonadotrope cell proliferation, migration and invasion, when overexpressed. May play a role in cell pituitary tumor development. This is BMP/retinoic acid-inducible neural-specific protein 3 (Brinp3) from Mus musculus (Mouse).